Here is a 496-residue protein sequence, read N- to C-terminus: Catalase isozyme 3 (496 aa).

Residues 1–25 (MTMDPTKFRPSSSHDTTVTTTNAGA) form a disordered region. The segment covering 9 to 23 (RPSSSHDTTVTTTNA) has biased composition (polar residues). Catalysis depends on residues His-67 and Asn-140. Residue Tyr-351 coordinates heme. A disordered region spans residues 402-422 (PLRQAAPPTPLPPRPVAGRRE).

Belongs to the catalase family. In terms of assembly, homotetramer. Requires heme as cofactor. Leaf mesophyll cells, pericarp, seedling roots and the coleoptile.

It is found in the mitochondrion. The catalysed reaction is 2 H2O2 = O2 + 2 H2O. Functionally, occurs in almost all aerobically respiring organisms and serves to protect cells from the toxic effects of hydrogen peroxide. Its levels are highest in the light period and are lowest in the dark period, hence it may be important for scavenging hydrogen peroxide at night, rather than during the day. This is Catalase isozyme 3 (CAT3) from Zea mays (Maize).